The following is a 126-amino-acid chain: Small ribosomal subunit protein uS8 (126 aa).

This sequence belongs to the universal ribosomal protein uS8 family. In terms of assembly, part of the 30S ribosomal subunit. Contacts proteins S5 and S12.

In terms of biological role, one of the primary rRNA binding proteins, it binds directly to 16S rRNA central domain where it helps coordinate assembly of the platform of the 30S subunit. This chain is Small ribosomal subunit protein uS8, found in Nitratidesulfovibrio vulgaris (strain ATCC 29579 / DSM 644 / CCUG 34227 / NCIMB 8303 / VKM B-1760 / Hildenborough) (Desulfovibrio vulgaris).